The sequence spans 718 residues: Exostosin-2 (718 aa).

Residues 1–25 (MCASVKSNIRGPALIPRMKTKHRIY) are Cytoplasmic-facing. The helical; Signal-anchor for type II membrane protein transmembrane segment at 26–46 (YVTLFSIVLLGLIATGMFQFW) threads the bilayer. Residues 47 to 718 (PHSIESSSDG…LKSFPNIGSL (672 aa)) are Lumenal-facing. Intrachain disulfides connect Cys85–Cys90, Cys96–Cys151, Cys286–Cys300, and Cys318–Cys339. The N-linked (GlcNAc...) asparagine glycan is linked to Asn288. 4 residues coordinate UDP: Leu461, Arg465, Asn490, and Asn517. Positions 465, 490, 517, 522, 538, 539, and 540 each coordinate UDP-N-acetyl-alpha-D-glucosamine. UDP-binding residues include Asp538 and Asp539. Residue Asp540 coordinates Mn(2+). The a protein site is built by Tyr582 and Ser584. A disulfide bridge links Cys626 with Cys676. UDP-N-acetyl-alpha-D-glucosamine is bound by residues Glu627 and Asp628. Asn637 carries N-linked (GlcNAc...) asparagine glycosylation. 2 residues coordinate a protein: Lys651 and Lys653. Residue Arg673 coordinates UDP-N-acetyl-alpha-D-glucosamine.

This sequence belongs to the glycosyltransferase 47 family. As to quaternary structure, part of the heparan sulfate polymerase, a dimeric complex composed of EXT1 and EXT2. Could also form homooligomeric complexes. Interacts with NDST1. Interacts with GALNT5. Requires Mn(2+) as cofactor. Post-translationally, N-glycosylated at Asn-637. A soluble form is generated by proteolytic processing. As to expression, expressed in heart, brain, spleen, lung, liver, skeletal muscle and testis. Heart shows a high expression.

The protein resides in the golgi apparatus membrane. The protein localises to the golgi apparatus. It localises to the cis-Golgi network membrane. Its subcellular location is the endoplasmic reticulum membrane. It is found in the secreted. It catalyses the reaction 3-O-{[(1-&gt;4)-beta-D-GlcA-(1-&gt;4)-alpha-D-GlcNAc](n)-(1-&gt;4)-beta-D-GlcA-(1-&gt;3)-beta-D-Gal-(1-&gt;3)-beta-D-Gal-(1-&gt;4)-beta-D-Xyl}-L-seryl-[protein] + UDP-N-acetyl-alpha-D-glucosamine = 3-O-{alpha-D-GlcNAc-[(1-&gt;4)-beta-D-GlcA-(1-&gt;4)-alpha-D-GlcNAc](n)-(1-&gt;4)-beta-D-GlcA-(1-&gt;3)-beta-D-Gal-(1-&gt;3)-beta-D-Gal-(1-&gt;4)-beta-D-Xyl}-L-seryl-[protein] + UDP + H(+). It participates in protein modification; protein glycosylation. Glycosyltransferase forming with EXT1 the heterodimeric heparan sulfate polymerase which catalyzes the elongation of the heparan sulfate glycan backbone. Glycan backbone extension consists in the alternating transfer of (1-&gt;4)-beta-D-GlcA and (1-&gt;4)-alpha-D-GlcNAc residues from their respective UDP-sugar donors. Both EXT1 and EXT2 are required for the full activity of the polymerase since EXT1 bears the N-acetylglucosaminyl-proteoglycan 4-beta-glucuronosyltransferase activity within the complex while EXT2 carries the glucuronosyl-N-acetylglucosaminyl-proteoglycan 4-alpha-N-acetylglucosaminyltransferase activity. Heparan sulfate proteoglycans are ubiquitous components of the extracellular matrix and play an important role in tissue homeostasis and signaling. The polypeptide is Exostosin-2 (Mus musculus (Mouse)).